We begin with the raw amino-acid sequence, 223 residues long: MNNPAMTIKGEQAKKQLIAAALAQFGEYGMNATTREIAAQAGQNIAAITYYFGSKEDLYLACAQWIADFIGEQFRPHAEEAERLFAQPQPDRAAIRELILRACRNMIKLLTQDDTVNLSKFISREQLSPTAAYHLVHEQVISPLHSHLTRLIAAWTGCDANDTRMILHTHALIGEILAFRLGKETILLRTGWTAFDEEKTELINQTVTCHIDLILQGLSQRSL.

The HTH tetR-type domain occupies 11-70 (EQAKKQLIAAALAQFGEYGMNATTREIAAQAGQNIAAITYYFGSKEDLYLACAQWIADFI). Positions 33 to 52 (TTREIAAQAGQNIAAITYYF) form a DNA-binding region, H-T-H motif.

It localises to the cytoplasm. In terms of biological role, regulates transcription of the cecR-ybhGFSR operon and the rhlE gene, which altogether are involved in the control of sensitivity to cefoperazone and chloramphenicol. Represses the cecR-ybhGFSR operon and activates the rhlE operon. Acts by binding to a palindromic sequence within the intergenic spacer located between these two divergently transcribed operons. The polypeptide is HTH-type transcriptional dual regulator CecR (Shigella flexneri).